The following is a 1309-amino-acid chain: Angiotensin-converting enzyme (1309 aa).

Positions 1 to 33 (MGAASGCRWPWPPLLPLLLMLLLPPPPLPVALA) are cleaved as a signal peptide. The Extracellular segment spans residues 34 to 1259 (LDSALQPGNF…GLNLEEQQAR (1226 aa)). N-linked (GlcNAc...) asparagine glycans are attached at residues Asn-42, Asn-58, Asn-78, Asn-115, Asn-135, Asn-150, and Asn-164. Peptidase M2 domains are found at residues 44-627 (TADE…LGWP) and 646-1225 (VSDE…LGWP). Cysteines 161 and 169 form a disulfide. Chloride is bound at residue Tyr-235. A glycan (N-linked (GlcNAc...) asparagine) is linked at Asn-322. A disulfide bridge connects residues Cys-363 and Cys-381. His-394 contacts Zn(2+). Glu-395 (proton acceptor 1) is an active-site residue. Zn(2+) contacts are provided by His-398 and Glu-422. A glycan (N-linked (GlcNAc...) asparagine) is linked at Asn-512. Residue His-523 is the Proton donor 1 of the active site. An N-linked (GlcNAc...) asparagine glycan is attached at Asn-526. Residue Arg-532 participates in chloride binding. The cysteines at positions 548 and 560 are disulfide-linked. N-linked (GlcNAc...) asparagine glycosylation is found at Asn-680, Asn-698, Asn-717, and Asn-763. The cysteines at positions 760 and 766 are disulfide-linked. 2 residues coordinate chloride: Arg-794 and Tyr-832. A glycan (N-linked (GlcNAc...) asparagine) is linked at Asn-945. An intrachain disulfide couples Cys-960 to Cys-978. Residue His-991 participates in Zn(2+) binding. Glu-992 serves as the catalytic Proton acceptor 2. Residues His-995 and Glu-1019 each contribute to the Zn(2+) site. Residues Trp-1093 and Arg-1097 each contribute to the chloride site. His-1121 (proton donor 2) is an active-site residue. Residue Arg-1130 participates in chloride binding. Cys-1146 and Cys-1158 are oxidised to a cystine. 2 N-linked (GlcNAc...) asparagine glycosylation sites follow: Asn-1194 and Asn-1228. The juxtamembrane stalk stretch occupies residues 1218 to 1259 (HGEKLGWPQYNWTPNSARLEGSFAGTGRVNFLGLNLEEQQAR). A helical transmembrane segment spans residues 1260–1280 (VGQWVLLFLGVTLLVATMGLT). Residues 1281–1309 (QRLFSIRHQILRRTHRGPQFGSEVELRHS) lie on the Cytoplasmic side of the membrane. Ser-1302 is subject to Phosphoserine.

It belongs to the peptidase M2 family. As to quaternary structure, monomer and homodimer; homodimerizes following binding to an inhibitor. Interacts with calmodulin (CALM1, CALM2 or CALM3); interaction takes place in the cytoplasmic region and regulates phosphorylation and proteolytic cleavage. Zn(2+) serves as cofactor. Chloride is required as a cofactor. Produced following proteolytic cleavage by secretase enzymes that cleave the transmembrane form in the juxtamembrane stalk region upstream of the transmembrane region. Cleavage can take place at different sites of the juxtamembrane stalk region. Post-translationally, phosphorylated by CK2 on Ser-1302; which allows membrane retention. Phosphorylated on tyrosine residues on its extracellular part, promoting cleavage by secretase enzymes and formation of the soluble form (Angiotensin-converting enzyme, soluble form).

It localises to the cell membrane. It is found in the cytoplasm. The protein localises to the secreted. The enzyme catalyses Release of a C-terminal dipeptide, oligopeptide-|-Xaa-Yaa, when Xaa is not Pro, and Yaa is neither Asp nor Glu. Thus, conversion of angiotensin I to angiotensin II, with increase in vasoconstrictor activity, but no action on angiotensin II.. It carries out the reaction angiotensin I + H2O = L-histidyl-L-leucine + angiotensin II. It catalyses the reaction bradykinin + H2O = L-Phe-L-Arg + bradykinin(1-7). The catalysed reaction is substance P + H2O = substance P(1-9) + L-Leu-L-Met-NH2. The enzyme catalyses substance P + H2O = substance P(1-8) + Gly-L-Leu-L-Met-NH2. It carries out the reaction substance P + H2O = L-Phe-L-Phe-Gly-L-Leu-L-Met-NH2 + substance P(1-6). It catalyses the reaction neurotensin + H2O = neurotensin(1-11) + L-isoleucyl-L-leucine. The catalysed reaction is goralatide + H2O = N-acetyl-L-seryl-L-aspartate + L-lysyl-L-proline. The enzyme catalyses Met-enkephalin + H2O = L-phenylalanyl-L-methionine + L-tyrosylglycylglycine. It carries out the reaction Leu-enkephalin + H2O = L-tyrosylglycylglycine + L-phenylalanyl-L-leucine. It catalyses the reaction Met-enkephalin-Arg-Phe + H2O = L-arginyl-L-phenylalanine + Met-enkephalin. With respect to regulation, the dipeptidyl carboxypeptidase activity is strongly activated by chloride. The dipeptidyl carboxypeptidase activity is specifically inhibited by lisinopril, captopril and enalaprilat. In terms of biological role, dipeptidyl carboxypeptidase that removes dipeptides from the C-terminus of a variety of circulating hormones, such as angiotensin I, bradykinin or enkephalins, thereby playing a key role in the regulation of blood pressure, electrolyte homeostasis or synaptic plasticity. Composed of two similar catalytic domains, each possessing a functional active site, with different selectivity for substrates. Plays a major role in the angiotensin-renin system that regulates blood pressure and sodium retention by the kidney by converting angiotensin I to angiotensin II, resulting in an increase of the vasoconstrictor activity of angiotensin. Also able to inactivate bradykinin, a potent vasodilator, and therefore enhance the blood pressure response. Acts as a regulator of synaptic transmission by mediating cleavage of neuropeptide hormones, such as substance P, neurotensin or enkephalins. Catalyzes degradation of different enkephalin neuropeptides (Met-enkephalin, Leu-enkephalin, Met-enkephalin-Arg-Phe and possibly Met-enkephalin-Arg-Gly-Leu). Acts as a regulator of synaptic plasticity in the nucleus accumbens of the brain by mediating cleavage of Met-enkephalin-Arg-Phe, a strong ligand of Mu-type opioid receptor OPRM1, into Met-enkephalin. Met-enkephalin-Arg-Phe cleavage by ACE decreases activation of OPRM1, leading to long-term synaptic potentiation of glutamate release. Also acts as a regulator of hematopoietic stem cell differentiation by mediating degradation of hemoregulatory peptide N-acetyl-SDKP (AcSDKP). Acts as a regulator of cannabinoid signaling pathway by mediating degradation of hemopressin, an antagonist peptide of the cannabinoid receptor CNR1. Involved in amyloid-beta metabolism by catalyzing degradation of Amyloid-beta protein 40 and Amyloid-beta protein 42 peptides, thereby preventing plaque formation. Catalyzes cleavage of cholecystokinin (maturation of Cholecystokinin-8 and Cholecystokinin-5) and Gonadoliberin-1 (both maturation and degradation) hormones. Degradation of hemoregulatory peptide N-acetyl-SDKP (AcSDKP) and amyloid-beta proteins is mediated by the N-terminal catalytic domain, while angiotensin I and cholecystokinin cleavage is mediated by the C-terminal catalytic region. Soluble form that is released in blood plasma and other body fluids following proteolytic cleavage in the juxtamembrane stalk region. In Sus scrofa (Pig), this protein is Angiotensin-converting enzyme.